Here is a 79-residue protein sequence, read N- to C-terminus: Sec-independent protein translocase protein TatA (79 aa).

A helical transmembrane segment spans residues 1 to 21; the sequence is MGGFTSIWHWVIVLLVIVLLF. Positions 48-79 are disordered; that stretch reads EEEAKNEPKTLDAQVAQTKVHETSEIKSKQES. Residues 66-79 are compositionally biased toward basic and acidic residues; that stretch reads KVHETSEIKSKQES.

It belongs to the TatA/E family. In terms of assembly, the Tat system comprises two distinct complexes: a TatABC complex, containing multiple copies of TatA, TatB and TatC subunits, and a separate TatA complex, containing only TatA subunits. Substrates initially bind to the TatABC complex, which probably triggers association of the separate TatA complex to form the active translocon.

The protein resides in the cell inner membrane. In terms of biological role, part of the twin-arginine translocation (Tat) system that transports large folded proteins containing a characteristic twin-arginine motif in their signal peptide across membranes. TatA could form the protein-conducting channel of the Tat system. This Helicobacter pylori (strain Shi470) protein is Sec-independent protein translocase protein TatA.